The primary structure comprises 504 residues: Glycerol kinase (504 aa).

Threonine 13 serves as a coordination point for ADP. 3 residues coordinate ATP: threonine 13, threonine 14, and serine 15. Residue threonine 13 participates in sn-glycerol 3-phosphate binding. Arginine 17 is a binding site for ADP. The sn-glycerol 3-phosphate site is built by arginine 83, glutamate 84, and tyrosine 135. Positions 83, 84, and 135 each coordinate glycerol. Histidine 231 carries the post-translational modification Phosphohistidine; by HPr. Sn-glycerol 3-phosphate is bound at residue aspartate 245. Glycerol-binding residues include aspartate 245 and glutamine 246. ADP is bound by residues threonine 267 and glycine 310. Residues threonine 267, glycine 310, glutamine 314, and glycine 411 each coordinate ATP. ADP contacts are provided by glycine 411 and asparagine 415.

Belongs to the FGGY kinase family. As to quaternary structure, homotetramer and homodimer (in equilibrium). The phosphoenolpyruvate-dependent sugar phosphotransferase system (PTS), including enzyme I, and histidine-containing protein (HPr) are required for the phosphorylation, which leads to the activation of the enzyme.

The catalysed reaction is glycerol + ATP = sn-glycerol 3-phosphate + ADP + H(+). It functions in the pathway polyol metabolism; glycerol degradation via glycerol kinase pathway; sn-glycerol 3-phosphate from glycerol: step 1/1. Activated by phosphorylation and inhibited by fructose 1,6-bisphosphate (FBP). Its function is as follows. Key enzyme in the regulation of glycerol uptake and metabolism. Catalyzes the phosphorylation of glycerol to yield sn-glycerol 3-phosphate. This is Glycerol kinase from Ligilactobacillus salivarius (strain UCC118) (Lactobacillus salivarius).